The following is a 150-amino-acid chain: Galactose-binding lectin (150 aa).

H16 and G19 together coordinate D-galactose. A glycan (N-linked (GlcNAc...) asparagine) is linked at N26. D-galactose is bound by residues D27, 35–37, H64, and G67; that span reads DIH. The N-linked (GlcNAc...) asparagine glycan is linked to N74. Residues E75, 83-85, H108, and G111 contribute to the D-galactose site; that span reads DRH. An N-linked (GlcNAc...) asparagine glycan is attached at N118. Residues E119 and 127–129 contribute to the D-galactose site; that span reads DKH.

In terms of assembly, homodimer. Likely to form large oligomers; oligomerization enhances hemagglutination activity. In terms of processing, glycosylated.

Hemagglutination activity is not dependent on divalent cations. Hemagglutination activity is highly inhibited by D-galactose and N-acetyl-D-galactosamine, and to a lesser extent by raffinose. Also inhibited by melibiose and alpha-lactose, but not by beta-lactose or D-glucose. Functionally, D-galactose-binding lectin. Also binds N-acetyl-D-galactosamine. Has hemagglutination activity towards all types of human erythrocytes (O, A and B) and rabbit erythrocytes. Agglutinates Gram-negative and Gram-positive bacteria including E.coli DH5-alpha and L.plantarum ATCC8014, respectively, and has bacteriostatic activity against them. Also agglutinates M.lysodeikticus. May be involved in innate immunity by recognizing and eliminating pathogens. The protein is Galactose-binding lectin of Mytilus californianus (California mussel).